We begin with the raw amino-acid sequence, 255 residues long: MTRSVSFPLFLFAVVLSLSSSLLADDPKPIRREVYEGGKIYDISHRYTPEIPAWESSEGLGKTFLRLAASMKNGSFANVSEMKLSVHSGTHVDAPGHFWDNYYDAGFDTDSLDLQVLNGPALLVDVPRDKNITAEVMESLHIQRGVRRVLFRTSNTDKRLMFKKEFDSSFAGFMTDGAKWLVENTDIKLIGLDYLSFAAFEESPATHRVILKGRDIIPVEALKLDGVEVGTYSLHCLPLRLVGAEGAPTRCILIK.

Positions 1-24 (MTRSVSFPLFLFAVVLSLSSSLLA) are cleaved as a signal peptide.

The protein belongs to the Cyclase 1 superfamily.

The protein localises to the secreted. It localises to the extracellular space. It is found in the extracellular matrix. Its function is as follows. Acts as a negative regulator of fumonisin B1- and pathogen-induced programmed cell death (PCD), and regulates pathogen-induced symptom development. May function redundantly with CYCLASE2 for normal plant growth, development and viability. This chain is Cyclase-like protein 1, found in Arabidopsis thaliana (Mouse-ear cress).